The following is a 210-amino-acid chain: Chaperone protein TorD (210 aa).

This sequence belongs to the TorD/DmsD family. TorD subfamily.

It is found in the cytoplasm. In terms of biological role, involved in the biogenesis of TorA. Acts on TorA before the insertion of the molybdenum cofactor and, as a result, probably favors a conformation of the apoenzyme that is competent for acquiring the cofactor. This Salmonella paratyphi B (strain ATCC BAA-1250 / SPB7) protein is Chaperone protein TorD.